The following is a 309-amino-acid chain: MGLIGKDLIGLRDMPAERIKLILDTAVPMKEIIRRQIKKVPTLRGRTVVTVFYEASTRTRTSFELAAKYLSADTVTIAAAASSVSKGESLKDTARTIAAMGADAVVLRHPMAGAAELLARTVDAAVINAGDGAHEHPSQALLDLFTVREKKGRLEGLKVAIIGDIMHSRVARSDIWGFTRMGAEVRLAGPATLLPPGLEKMGARVCSSVEEALMDADVVIVLRIQLERQQQGLFPGLREYARLFGINRERLRLAAPGAVVMHPGPMNRGIEISPEVADGLQSAINEQVNNGVAVRMALLYLLTGGGCRK.

Carbamoyl phosphate contacts are provided by Arg58 and Thr59. L-aspartate is bound at residue Lys86. Carbamoyl phosphate-binding residues include Arg108, His136, and Gln139. L-aspartate-binding residues include Arg169 and Arg223. Carbamoyl phosphate contacts are provided by Gly264 and Pro265.

This sequence belongs to the aspartate/ornithine carbamoyltransferase superfamily. ATCase family. Heterododecamer (2C3:3R2) of six catalytic PyrB chains organized as two trimers (C3), and six regulatory PyrI chains organized as three dimers (R2).

The catalysed reaction is carbamoyl phosphate + L-aspartate = N-carbamoyl-L-aspartate + phosphate + H(+). It functions in the pathway pyrimidine metabolism; UMP biosynthesis via de novo pathway; (S)-dihydroorotate from bicarbonate: step 2/3. In terms of biological role, catalyzes the condensation of carbamoyl phosphate and aspartate to form carbamoyl aspartate and inorganic phosphate, the committed step in the de novo pyrimidine nucleotide biosynthesis pathway. This Pelotomaculum thermopropionicum (strain DSM 13744 / JCM 10971 / SI) protein is Aspartate carbamoyltransferase catalytic subunit.